Here is a 413-residue protein sequence, read N- to C-terminus: MAEICYENETMMIETTATVVKKATTTTRRRERSSSQAARRRRMEIRRFKFVSGEQEPVFVDGDLQRRRRRESTVAASTSTVFYETAKEVVVLCESLSSTVVALPDPEAYPKYGVASVCGRRREMEDAVAVHPFFSRHQTEYSSTGFHYCGVYDGHGCSHVAMKCRERLHELVREEFEADADWEKSMARSFTRMDMEVVALNADGAAKCRCELQRPDCDAVGSTAVVSVLTPEKIIVANCGDSRAVLCRNGKAIALSSDHKPDRPDELDRIQAAGGRVIYWDGPRVLGVLAMSRAIGDNYLKPYVISRPEVTVTDRANGDDFLILASDGLWDVVSNETACSVVRMCLRGKVNGQVSSSPEREMTGVGAGNVVVGGGDLPDKACEEASLLLTRLALARQSSDNVSVVVVDLRRDT.

Residues 21 to 40 (KKATTTTRRRERSSSQAARR) form a disordered region. In terms of domain architecture, PPM-type phosphatase spans 111–409 (KYGVASVCGR…DNVSVVVVDL (299 aa)). Residues Asp153, Gly154, Asp327, and Asp400 each contribute to the Mn(2+) site.

The protein belongs to the PP2C family. Requires Mg(2+) as cofactor. Mn(2+) is required as a cofactor.

It localises to the golgi apparatus. Its subcellular location is the nucleus. It catalyses the reaction O-phospho-L-seryl-[protein] + H2O = L-seryl-[protein] + phosphate. The catalysed reaction is O-phospho-L-threonyl-[protein] + H2O = L-threonyl-[protein] + phosphate. Its function is as follows. Acts as a negative regulator of abscisic acid (ABA) signaling for stomatal closure in leaves, and controls water loss during leaf senescence. Activated by the NAC029/NAP transcription factor during ABA signaling in senescing leaves. Functions as a negative regulator of osmotic stress and ABA signaling. Acts as a negative regulator of response to drought. The sequence is that of Probable protein phosphatase 2C 78 from Arabidopsis thaliana (Mouse-ear cress).